A 396-amino-acid chain; its full sequence is S-arrestin (396 aa).

The protein belongs to the arrestin family.

Functionally, arrestin is one of the major proteins of the ros (retinal rod outer segments); it binds to photoactivated-phosphorylated rhodopsin, thereby apparently preventing the transducin-mediated activation of phosphodiesterase. This chain is S-arrestin, found in Aquarana catesbeiana (American bullfrog).